The chain runs to 172 residues: Adenine phosphoribosyltransferase (172 aa).

Belongs to the purine/pyrimidine phosphoribosyltransferase family. As to quaternary structure, homodimer.

It is found in the cytoplasm. It carries out the reaction AMP + diphosphate = 5-phospho-alpha-D-ribose 1-diphosphate + adenine. It participates in purine metabolism; AMP biosynthesis via salvage pathway; AMP from adenine: step 1/1. In terms of biological role, catalyzes a salvage reaction resulting in the formation of AMP, that is energically less costly than de novo synthesis. This is Adenine phosphoribosyltransferase from Streptococcus uberis (strain ATCC BAA-854 / 0140J).